We begin with the raw amino-acid sequence, 323 residues long: ATP synthase gamma chain (323 aa).

It belongs to the ATPase gamma chain family. F-type ATPases have 2 components, CF(1) - the catalytic core - and CF(0) - the membrane proton channel. CF(1) has five subunits: alpha(3), beta(3), gamma(1), delta(1), epsilon(1). CF(0) has three main subunits: a, b and c.

Its subcellular location is the cell inner membrane. In terms of biological role, produces ATP from ADP in the presence of a proton gradient across the membrane. The gamma chain is believed to be important in regulating ATPase activity and the flow of protons through the CF(0) complex. The protein is ATP synthase gamma chain of Rickettsia rickettsii (strain Iowa).